A 675-amino-acid chain; its full sequence is DNA ligase 1 (675 aa).

NAD(+)-binding positions include 34–38 (DFEYD), 83–84 (SL), and E114. The active-site N6-AMP-lysine intermediate is K116. NAD(+) contacts are provided by R137, E177, K295, and K319. Positions 413, 416, 431, and 436 each coordinate Zn(2+). Residues 596–675 (NSGSALAGKT…AEFLRLLSGG (80 aa)) form the BRCT domain.

It belongs to the NAD-dependent DNA ligase family. LigA subfamily. Mg(2+) serves as cofactor. It depends on Mn(2+) as a cofactor.

The catalysed reaction is NAD(+) + (deoxyribonucleotide)n-3'-hydroxyl + 5'-phospho-(deoxyribonucleotide)m = (deoxyribonucleotide)n+m + AMP + beta-nicotinamide D-nucleotide.. Functionally, DNA ligase that catalyzes the formation of phosphodiester linkages between 5'-phosphoryl and 3'-hydroxyl groups in double-stranded DNA using NAD as a coenzyme and as the energy source for the reaction. It is essential for DNA replication and repair of damaged DNA. This chain is DNA ligase 1, found in Opitutus terrae (strain DSM 11246 / JCM 15787 / PB90-1).